Here is a 277-residue protein sequence, read N- to C-terminus: Digeranylgeranylglyceryl phosphate synthase (277 aa).

7 helical membrane-spanning segments follow: residues 13 to 33 (PGNA…AGGL), 40 to 60 (AFAV…NDYF), 89 to 109 (VALF…AIAI), 143 to 163 (FLYG…LFAL), 199 to 219 (RSLY…PLPY), 220 to 240 (LLGL…CGLA), and 256 to 276 (WLKA…LAVV).

This sequence belongs to the UbiA prenyltransferase family. DGGGP synthase subfamily. Mg(2+) is required as a cofactor.

The protein localises to the cell membrane. It carries out the reaction sn-3-O-(geranylgeranyl)glycerol 1-phosphate + (2E,6E,10E)-geranylgeranyl diphosphate = 2,3-bis-O-(geranylgeranyl)-sn-glycerol 1-phosphate + diphosphate. It functions in the pathway membrane lipid metabolism; glycerophospholipid metabolism. Functionally, prenyltransferase that catalyzes the transfer of the geranylgeranyl moiety of geranylgeranyl diphosphate (GGPP) to the C2 hydroxyl of (S)-3-O-geranylgeranylglyceryl phosphate (GGGP). This reaction is the second ether-bond-formation step in the biosynthesis of archaeal membrane lipids. The polypeptide is Digeranylgeranylglyceryl phosphate synthase (Natronomonas pharaonis (strain ATCC 35678 / DSM 2160 / CIP 103997 / JCM 8858 / NBRC 14720 / NCIMB 2260 / Gabara) (Halobacterium pharaonis)).